We begin with the raw amino-acid sequence, 557 residues long: Hydroxylamine reductase (557 aa).

[4Fe-4S] cluster-binding residues include Cys3, Cys6, Cys19, and Cys26. The hybrid [4Fe-2O-2S] cluster site is built by His253, Glu277, Cys321, Cys408, Cys436, Cys461, Glu495, and Lys497. The residue at position 408 (Cys408) is a Cysteine persulfide.

The protein belongs to the HCP family. [4Fe-4S] cluster is required as a cofactor. Requires hybrid [4Fe-2O-2S] cluster as cofactor.

It is found in the cytoplasm. It carries out the reaction A + NH4(+) + H2O = hydroxylamine + AH2 + H(+). Its function is as follows. Catalyzes the reduction of hydroxylamine to form NH(3) and H(2)O. The protein is Hydroxylamine reductase of Acidiphilium cryptum (strain JF-5).